The primary structure comprises 320 residues: Replication factor C small subunit 2 (320 aa).

44-51 (GPPGTGKT) serves as a coordination point for ATP.

The protein belongs to the activator 1 small subunits family. RfcS subfamily. Heteromultimer composed of small subunits (RfcS) and large subunits (RfcL).

In terms of biological role, part of the RFC clamp loader complex which loads the PCNA sliding clamp onto DNA. This Pyrobaculum islandicum (strain DSM 4184 / JCM 9189 / GEO3) protein is Replication factor C small subunit 2.